The primary structure comprises 367 residues: Heme A synthase (367 aa).

Helical transmembrane passes span 12 to 32 (GAVR…VAVG), 99 to 119 (LLGR…WWQG), 127 to 147 (LGLL…WIMV), 163 to 183 (LALH…LAAG), and 198 to 218 (ATAL…GLVA). Residue histidine 264 participates in heme binding. 3 helical membrane passes run 266–286 (VTAY…RLTG), 296–316 (GVVI…LLAV), and 317–337 (PLWA…MATV). Histidine 324 provides a ligand contact to heme.

It belongs to the COX15/CtaA family. Type 2 subfamily. As to quaternary structure, interacts with CtaB. Heme b is required as a cofactor.

Its subcellular location is the cell membrane. It carries out the reaction Fe(II)-heme o + 2 A + H2O = Fe(II)-heme a + 2 AH2. The protein operates within porphyrin-containing compound metabolism; heme A biosynthesis; heme A from heme O: step 1/1. In terms of biological role, catalyzes the conversion of heme O to heme A by two successive hydroxylations of the methyl group at C8. The first hydroxylation forms heme I, the second hydroxylation results in an unstable dihydroxymethyl group, which spontaneously dehydrates, resulting in the formyl group of heme A. In Methylobacterium radiotolerans (strain ATCC 27329 / DSM 1819 / JCM 2831 / NBRC 15690 / NCIMB 10815 / 0-1), this protein is Heme A synthase.